Here is a 216-residue protein sequence, read N- to C-terminus: Small ribosomal subunit protein uS3c (216 aa).

The KH type-2 domain occupies 43-118 (IKNYIQKNIR…KLNIAIVKIT (76 aa)).

Belongs to the universal ribosomal protein uS3 family. In terms of assembly, part of the 30S ribosomal subunit.

The protein localises to the plastid. The protein resides in the chloroplast. In Phaseolus vulgaris (Kidney bean), this protein is Small ribosomal subunit protein uS3c (rps3).